The chain runs to 158 residues: Large ribosomal subunit protein uL11 (158 aa).

It belongs to the universal ribosomal protein uL11 family. In terms of assembly, part of the ribosomal stalk of the 50S ribosomal subunit. Interacts with L10 and the large rRNA to form the base of the stalk. L10 forms an elongated spine to which L12 dimers bind in a sequential fashion forming a multimeric L10(L12)X complex.

Its function is as follows. Forms part of the ribosomal stalk which helps the ribosome interact with GTP-bound translation factors. The chain is Large ribosomal subunit protein uL11 from Methanocella arvoryzae (strain DSM 22066 / NBRC 105507 / MRE50).